Reading from the N-terminus, the 431-residue chain is Mevalonate kinase (431 aa).

Residues Lys13, Ser139, and 144–150 (GAGLGSS) contribute to the ATP site. Mg(2+) contacts are provided by Ser150 and Glu198. The active-site Proton acceptor is the Asp209.

Belongs to the GHMP kinase family. Mevalonate kinase subfamily. In terms of assembly, homodimer.

It localises to the cytoplasm. Its subcellular location is the cytosol. It carries out the reaction (R)-mevalonate + ATP = (R)-5-phosphomevalonate + ADP + H(+). It participates in isoprenoid biosynthesis; isopentenyl diphosphate biosynthesis via mevalonate pathway; isopentenyl diphosphate from (R)-mevalonate: step 1/3. Mevalonate kinase; part of the second module of ergosterol biosynthesis pathway that includes the middle steps of the pathway. ERG12 converts mevalonate into 5-phosphomevalonate. The second module is carried out in the vacuole and involves the formation of farnesyl diphosphate, which is also an important intermediate in the biosynthesis of ubiquinone, dolichol, heme and prenylated proteins. Activity by the mevalonate kinase ERG12 first converts mevalonate into 5-phosphomevalonate. 5-phosphomevalonate is then further converted to 5-diphosphomevalonate by the phosphomevalonate kinase ERG8. The diphosphomevalonate decarboxylase MVD then produces isopentenyl diphosphate. The isopentenyl-diphosphate delta-isomerase IDI1 then catalyzes the 1,3-allylic rearrangement of the homoallylic substrate isopentenyl (IPP) to its highly electrophilic allylic isomer, dimethylallyl diphosphate (DMAPP). Finally the farnesyl diphosphate synthase ERG20 catalyzes the sequential condensation of isopentenyl pyrophosphate with dimethylallyl pyrophosphate, and then with the resultant geranylpyrophosphate to the ultimate product farnesyl pyrophosphate. The protein is Mevalonate kinase of Candida albicans (strain SC5314 / ATCC MYA-2876) (Yeast).